The following is a 309-amino-acid chain: Low density lipoprotein receptor adapter protein 1-A (309 aa).

The PID domain occupies 41–195; that stretch reads LLEGMLFHLK…SGGEGASSSQ (155 aa). A disordered region spans residues 179–199; it reads EKREKSGSGGEGASSSQSDGS. Residues 213 to 217 carry the Clathrin box motif; that stretch reads LLDLE. The segment at 250–277 is AP-2 complex binding; that stretch reads WELDDGLDEAFARLAESRTNPQVLDIGL. The short motif at 258 to 267 is the [DE]-X(1,2)-F-X-X-[FL]-X-X-X-R motif element; sequence EAFARLAESR.

Interacts (via PID domain) with ldlr (via NPXY motif). Binds to soluble clathrin trimers and to the adapter protein complex 2 (AP-2, beta 2 subunit). Binds to phosphoinositides, which regulate clathrin bud assembly at the cell surface. Interacts with the VLDL receptor (vldlr). Interacts with the vitellogenin receptor. Expressed at high level during oogenesis and embryogenesis. Found in the oocyte vegetal cortex. Found at low level in the adult liver and spleen. Found at very low level in testis and heart.

Its subcellular location is the cytoplasm. Functionally, adapter protein (clathrin-associated sorting protein (CLASP)) required for efficient endocytosis of the LDL receptor (LDLR). Also involved in the vitellogenin receptor mediated endocytosis of nutrients during oogenesis. In Xenopus laevis (African clawed frog), this protein is Low density lipoprotein receptor adapter protein 1-A.